A 227-amino-acid polypeptide reads, in one-letter code: Translation initiation factor 6 (227 aa).

The protein belongs to the eIF-6 family.

Binds to the 50S ribosomal subunit and prevents its association with the 30S ribosomal subunit to form the 70S initiation complex. The protein is Translation initiation factor 6 of Pyrococcus horikoshii (strain ATCC 700860 / DSM 12428 / JCM 9974 / NBRC 100139 / OT-3).